A 442-amino-acid polypeptide reads, in one-letter code: Probable diguanylate cyclase DgcI (442 aa).

The first 23 residues, 1–23 (MSRINKFVLTVSLLIFIMISAVA), serve as a signal peptide directing secretion. The N-palmitoyl cysteine moiety is linked to residue cysteine 24. Residue cysteine 24 is the site of S-diacylglycerol cysteine attachment. Residues 231–251 (LIIFFAALVAVISGASCLYLV) traverse the membrane as a helical segment. The GGDEF domain maps to 319 to 442 (KGGYLCLFDV…KNGRAQISWQ (124 aa)). Residue aspartate 327 coordinates Mg(2+). The substrate site is built by asparagine 335, histidine 340, and aspartate 344. Aspartate 371 is a binding site for Mg(2+).

In terms of assembly, homodimer. Mg(2+) is required as a cofactor.

The protein resides in the cell membrane. The catalysed reaction is 2 GTP = 3',3'-c-di-GMP + 2 diphosphate. Its pathway is purine metabolism; 3',5'-cyclic di-GMP biosynthesis. In terms of biological role, catalyzes the synthesis of cyclic-di-GMP (c-di-GMP) via the condensation of 2 GTP molecules. This Escherichia coli (strain K12) protein is Probable diguanylate cyclase DgcI.